We begin with the raw amino-acid sequence, 329 residues long: NAD(P)H-dependent D-xylose reductase (329 aa).

Tyr52 (proton donor) is an active-site residue. A substrate-binding site is contributed by His114. Residues 173 to 174 (SN), 222 to 231 (SSFGPVSFLE), and 278 to 288 (KSSKKERLLDN) each bind NAD(+).

Belongs to the aldo/keto reductase family.

It catalyses the reaction xylitol + NAD(+) = D-xylose + NADH + H(+). It carries out the reaction xylitol + NADP(+) = D-xylose + NADPH + H(+). It functions in the pathway carbohydrate metabolism; D-xylose degradation. Its function is as follows. Reduces D-xylose into xylitol. The chain is NAD(P)H-dependent D-xylose reductase (XYL1) from Kluyveromyces lactis (strain ATCC 8585 / CBS 2359 / DSM 70799 / NBRC 1267 / NRRL Y-1140 / WM37) (Yeast).